The sequence spans 119 residues: Large ribosomal subunit protein bL19 (119 aa).

It belongs to the bacterial ribosomal protein bL19 family.

In terms of biological role, this protein is located at the 30S-50S ribosomal subunit interface and may play a role in the structure and function of the aminoacyl-tRNA binding site. This Leuconostoc mesenteroides subsp. mesenteroides (strain ATCC 8293 / DSM 20343 / BCRC 11652 / CCM 1803 / JCM 6124 / NCDO 523 / NBRC 100496 / NCIMB 8023 / NCTC 12954 / NRRL B-1118 / 37Y) protein is Large ribosomal subunit protein bL19.